Here is a 432-residue protein sequence, read N- to C-terminus: Glutamate-1-semialdehyde 2,1-aminomutase (432 aa).

Residue K269 is modified to N6-(pyridoxal phosphate)lysine.

It belongs to the class-III pyridoxal-phosphate-dependent aminotransferase family. HemL subfamily. As to quaternary structure, homodimer. Requires pyridoxal 5'-phosphate as cofactor.

The protein localises to the cytoplasm. It catalyses the reaction (S)-4-amino-5-oxopentanoate = 5-aminolevulinate. It participates in porphyrin-containing compound metabolism; protoporphyrin-IX biosynthesis; 5-aminolevulinate from L-glutamyl-tRNA(Glu): step 2/2. The protein operates within porphyrin-containing compound metabolism; chlorophyll biosynthesis. In Chloroherpeton thalassium (strain ATCC 35110 / GB-78), this protein is Glutamate-1-semialdehyde 2,1-aminomutase.